Consider the following 161-residue polypeptide: Nucleotide-binding protein Ssed_3443 (161 aa).

The protein belongs to the YajQ family.

In terms of biological role, nucleotide-binding protein. The polypeptide is Nucleotide-binding protein Ssed_3443 (Shewanella sediminis (strain HAW-EB3)).